Reading from the N-terminus, the 559-residue chain is MQGPWVLLLLGLRLQLSLSVIPVEEENPAFWNKKAAEALDAAKKLQPIQTSAKNLIIFLGDGMGVPTVTATRILKGQLEGHLGPETPLAMDRFPYMALSKTYSVDRQVPDSASTATAYLCGVKTNYKTIGLSAAARFDQCNTTFGNEVFSVMYRAKKAGKSVGVVTTTRVQHASPSGTYVHTVNRNWYGDADMPASALREGCKDIATQLISNMDINVILGGGRKYMFPAGTPDPEYPNDANETGTRLDGRNLVQEWLSKHQGSQYVWNREQLIQKAQDPSVTYLMGLFEPVDTKFDIQRDPLMDPSLKDMTETAVKVLSRNPKGFYLFVEGGRIDRGHHLGTAYLALTEAVMFDLAIERASQLTSERDTLTIVTADHSHVFSFGGYTLRGTSIFGLAPLNALDGKPYTSILYGNGPGYVGTGERPNVTAAESSGSSYRRQAAVPVKSETHGGEDVAIFARGPQAHLVHGVQEQNYIAHVMASAGCLEPYTDCGLAPPADESQTTTTTRQTTITTTTTTTTTTTTPVHNSARSLGPATAPLALALLAGMLMLLLGAPAES.

The signal sequence occupies residues 1–19 (MQGPWVLLLLGLRLQLSLS). Asp-61 contributes to the Mg(2+) binding site. Zn(2+) is bound by residues Asp-61 and Ser-111. Ser-111 acts as the Phosphoserine intermediate in catalysis. Cysteines 140 and 202 form a disulfide. The N-linked (GlcNAc...) asparagine glycan is linked to Asn-141. Ser-174 lines the Mg(2+) pocket. Glu-235 is a binding site for Ca(2+). An N-linked (GlcNAc...) asparagine glycan is attached at Asn-241. Residues Phe-288, Glu-289, and Asp-304 each coordinate Ca(2+). Glu-330 is a binding site for Mg(2+). Zn(2+)-binding residues include Asp-335, His-339, Asp-376, and His-377. N-linked (GlcNAc...) asparagine glycosylation is present at Asn-426. Residue His-450 coordinates Zn(2+). Cys-485 and Cys-492 are disulfide-bonded. Residues 496–531 (PPADESQTTTTTRQTTITTTTTTTTTTTTPVHNSAR) form a disordered region. Positions 503-524 (TTTTTRQTTITTTTTTTTTTTT) are enriched in low complexity. A lipid anchor (GPI-anchor amidated asparagine) is attached at Asn-528. A propeptide spans 529–559 (SARSLGPATAPLALALLAGMLMLLLGAPAES) (removed in mature form).

It belongs to the alkaline phosphatase family. In terms of assembly, homodimer. Requires Mg(2+) as cofactor. Zn(2+) serves as cofactor. Ca(2+) is required as a cofactor. As to expression, intestine and thymus.

It is found in the cell membrane. It catalyses the reaction a phosphate monoester + H2O = an alcohol + phosphate. Its function is as follows. Alkaline phosphatase that can hydrolyze various phosphate compounds. This chain is Intestinal-type alkaline phosphatase (Iap), found in Mus musculus (Mouse).